The primary structure comprises 63 residues: Large ribosomal subunit protein uL30 (63 aa).

It belongs to the universal ribosomal protein uL30 family. Part of the 50S ribosomal subunit.

The chain is Large ribosomal subunit protein uL30 from Rickettsia massiliae (strain Mtu5).